We begin with the raw amino-acid sequence, 460 residues long: UDP-glycosyltransferase 74B1 (460 aa).

The active-site Proton acceptor is His22. His22 contacts an anthocyanidin. The Charge relay role is filled by Asp113. Thr135, Gln339, His354, Trp357, Asn358, Ser359, Glu362, Asp378, and Gln379 together coordinate UDP-alpha-D-glucose.

The protein belongs to the UDP-glycosyltransferase family. As to expression, expressed in the vasculature, the apical meristems of roots, shoots and inflorescence, and the junction of organ or branches.

It catalyses the reaction (Z)-2-phenyl-1-thioacetohydroximate + UDP-alpha-D-glucose = (Z)-desulfoglucotropeolin + UDP. The catalysed reaction is a (Z)-omega-(methylsulfanyl)alkyl-thiohydroximate + UDP-alpha-D-glucose = an aliphatic (Z)-desulfo-glucosinolate + UDP. It carries out the reaction (Z)-2-(indol-3-yl)-1-thioacetohydroximate + UDP-alpha-D-glucose = (Z)-indolylmethyl desulfoglucosinolate + UDP. Involved in the biosynthesis of glucosinolate. In in vitro assay, may use phenylacetothiohydroximate (PATH), but not phenylacetic acid (PAA), indole-3-acetic acid (IAA) or salicylic acid (SA) as substrate. Specific for the thiohydroximate functional group and does not glucosylate the carboxylate group or a hydroxyl group. This chain is UDP-glycosyltransferase 74B1 (UGT74B1), found in Arabidopsis thaliana (Mouse-ear cress).